Here is a 362-residue protein sequence, read N- to C-terminus: MLKLSCNVTDSKLQRSLLFFSHSYRSDPVNFIRRRIVSCSQTKKTGLVPLRAVVSADQGSVVQGLATLADQLRLGSLTEDGLSYKEKFVVRSYEVGSNKTATVETIANLLQEVGCNHAQSVGFSTDGFATTTTMRKLHLIWVTARMHIEIYKYPAWGDVVEIETWCQSEGRIGTRRDWILKDSVTGEVTGRATSKWVMMNQDTRRLQKVSDDVRDEYLVFCPQEPRLAFPEENNRSLKKIPKLEDPAQYSMIGLKPRRADLDMNQHVNNVTYIGWVLESIPQEIVDTHELQVITLDYRRECQQDDVVDSLTTTTSEIGGTNGSATSGTQGHNDSQFLHLLRLSGDGQEINRGTTLWRKKPSS.

The transit peptide at Met-1–Ser-38 directs the protein to the chloroplast. Active-site residues include Asn-264, His-266, and Cys-301. Residues Thr-312 to His-331 are disordered. The segment covering Ser-315 to His-331 has biased composition (polar residues).

Belongs to the acyl-ACP thioesterase family.

Its subcellular location is the plastid. The protein localises to the chloroplast. The catalysed reaction is (9Z)-octadecenoyl-[ACP] + H2O = (9Z)-octadecenoate + holo-[ACP] + H(+). Plays an essential role in chain termination during de novo fatty acid synthesis. Possesses high thioesterase activity for oleoyl-ACP versus other acyl-ACPs. Substrate preference is 18:1 &gt; 18:0 &gt; 16:1. This is Oleoyl-acyl carrier protein thioesterase 1, chloroplastic (FATA) from Arabidopsis thaliana (Mouse-ear cress).